Reading from the N-terminus, the 274-residue chain is Thiamine kinase (274 aa).

It belongs to the thiamine kinase family.

It catalyses the reaction thiamine + ATP = thiamine phosphate + ADP + H(+). The protein operates within cofactor biosynthesis; thiamine diphosphate biosynthesis; thiamine phosphate from thiamine: step 1/1. In terms of biological role, catalyzes the ATP-dependent phosphorylation of thiamine to thiamine phosphate. Is involved in thiamine salvage. The protein is Thiamine kinase of Salmonella choleraesuis (strain SC-B67).